We begin with the raw amino-acid sequence, 446 residues long: Methionine aminopeptidase 2 (446 aa).

The tract at residues 1–85 is disordered; the sequence is MAGVTEGEDT…KNKKKKKKKI (85 aa). A compositionally biased stretch (basic and acidic residues) spans 8–32; sequence EDTKVIESKINELNIDKPKLEDNNE. Positions 42–58 are enriched in acidic residues; it reads SGDDDDDDKEEDDDNEI. Basic residues predominate over residues 73 to 85; that stretch reads KKNKNKKKKKKKI. His197 contacts substrate. Positions 217, 228, and 299 each coordinate a divalent metal cation. Residue His307 coordinates substrate. Glu332 and Glu427 together coordinate a divalent metal cation.

Belongs to the peptidase M24A family. Methionine aminopeptidase eukaryotic type 2 subfamily. The cofactor is Co(2+). Zn(2+) is required as a cofactor. It depends on Mn(2+) as a cofactor. Requires Fe(2+) as cofactor.

Its subcellular location is the cytoplasm. The enzyme catalyses Release of N-terminal amino acids, preferentially methionine, from peptides and arylamides.. Functionally, cotranslationally removes the N-terminal methionine from nascent proteins. The N-terminal methionine is often cleaved when the second residue in the primary sequence is small and uncharged (Met-Ala-, Cys, Gly, Pro, Ser, Thr, or Val). In Candida albicans (strain SC5314 / ATCC MYA-2876) (Yeast), this protein is Methionine aminopeptidase 2.